We begin with the raw amino-acid sequence, 4700 residues long: StAR-related lipid transfer protein 9 (4700 aa).

One can recognise a Kinesin motor domain in the interval 3 to 384; that stretch reads NVQVAVRVRP…LRYASSAKNI (382 aa). 103–110 serves as a coordination point for ATP; the sequence is GQTGSGKT. Over residues 310–328 the composition is skewed to low complexity; sequence GDSGILSSPSGTSSGGAPS. The interval 310-331 is disordered; it reads GDSGILSSPSGTSSGGAPSRRQ. Residues 498 to 569 form the FHA domain; sequence LKEGTTKIGR…LTQGAVITLG (72 aa). Basic and acidic residues-rich tracts occupy residues 631–646 and 867–877; these read QCDEDHQTPRDGETSH and TSEKTSSEEHL. Disordered stretches follow at residues 631–652, 851–880, 1057–1104, and 1128–1188; these read QCDEDHQTPRDGETSHRAQIQQ, WDPSTTLPPRPDPTHQTSEKTSSEEHLPQA, KKSS…SDTD, and ERKW…GFTA. Acidic residues predominate over residues 1134–1146; it reads PEPENSESDDSQL. Serine 1203 is modified (phosphoserine). Disordered regions lie at residues 1939–1976, 2014–2043, 2088–2179, 2254–2290, 2377–2403, 2416–2444, 2479–2539, 2589–2613, 2642–2678, 2696–2731, 2765–2789, 2821–2852, 2892–2955, 3124–3144, 3199–3241, 3274–3412, 3564–3611, 3766–3790, 3830–3884, 3906–3991, 4033–4086, and 4153–4193; these read MPGESAVSLKSRSVDRRVSSPVMVAQGGGPTPKWEGKN, ERNPSECKSQEMLNPNREPSGKKQNKRVNN, DQKE…PARD, ESQVAEHVSSSNQEEPKAQGKVEEMPMQRGGSLQEEN, GVEHQDQSTETRSHSPEGNVRGRSSEA, MGSHSQSGVPESIPLGTEDRISASTSPQD, LNKV…PRLL, RVAGRPQCKQIDQSSSDQTRNEGEA, LSADSFESLPNTETDREPWDPVQAFSHAAPAQDRKRR, SSSSEIIEKKKDATRTPSSADPLAPDSPRSSAPVEE, PQETAEGIPPGSQDSSPEHQEPRTL, VQNSTSASGPKQDHVQCPEASTGFEEGRASPK, SKHS…PCRQ, NAQVCQTNPEPPATTQGPHTL, HTCS…GLDG, SLRQ…MPST, IALG…KGSA, SDTSTVSQEEGDVPGVPQKREAEET, LPSV…RVQK, ASTQ…SPKL, PEKV…QHLS, and PGGL…EWSK. The span at 2088 to 2100 shows a compositional bias: basic and acidic residues; sequence DQKEQEKTDHAFR. A compositionally biased stretch (polar residues) spans 2103–2118; that stretch reads SSGNPLPSKDQPSSPR. The segment covering 2119 to 2129 has biased composition (basic and acidic residues); sequence QTDDTVFRDSE. The segment covering 2137–2148 has biased composition (polar residues); that stretch reads SIGNHPQVQKIT. The segment covering 2153-2169 has biased composition (basic and acidic residues); the sequence is RSREGVRESEPVREHTH. Positions 2254–2266 are enriched in polar residues; the sequence is ESQVAEHVSSSNQ. Composition is skewed to basic and acidic residues over residues 2267 to 2279 and 2379 to 2391; these read EEPKAQGKVEEMP and EHQDQSTETRSHS. A compositionally biased stretch (basic and acidic residues) spans 2500–2510; that stretch reads QASKPRQKAEK. A compositionally biased stretch (polar residues) spans 2642–2653; that stretch reads LSADSFESLPNT. Positions 2712–2729 are enriched in low complexity; it reads PSSADPLAPDSPRSSAPV. A compositionally biased stretch (basic and acidic residues) spans 2916 to 2925; sequence APCRHPREAL. Residues 3124 to 3141 show a composition bias toward polar residues; the sequence is NAQVCQTNPEPPATTQGP. 3 stretches are compositionally biased toward polar residues: residues 3274 to 3285, 3320 to 3339, and 3368 to 3387; these read SLRQNETPQPAA, SSPTPQFSVVGSSRSLQELN, and SGKSVARTSLQAEDSNQKAS. Basic and acidic residues predominate over residues 3388–3397; that stretch reads SRLDDGTTDH. Positions 3857 to 3872 are enriched in low complexity; it reads SSPSPSSPHSPGLFPS. The segment covering 3906 to 3924 has biased composition (polar residues); sequence ASTQEPGLSPGSLTLSAPS. Residues 3958 to 3975 are compositionally biased toward low complexity; that stretch reads LGGSQRGRSSLQRSNGRS. The span at 4048 to 4065 shows a compositional bias: polar residues; sequence EPSQWQSRTENGGESSAS. A coiled-coil region spans residues 4334–4387; sequence SDIELMLQDYQQAHEEAKVEIARARDQLRERTEQEKLRIHQKIISQLLKEEDKL. Over residues 4397–4411 the composition is skewed to low complexity; that stretch reads CTSSNGSLSSGMTSG. The tract at residues 4397-4419 is disordered; sequence CTSSNGSLSSGMTSGYNSSPALS. One can recognise an START domain in the interval 4483-4700; that stretch reads SYQDLAKHVV…IARLASFLGR (218 aa).

The protein belongs to the TRAFAC class myosin-kinesin ATPase superfamily. Kinesin family. Interacts with ATAD3A. Expressed in the central nervous system, muscle cells (heart and skeletal muscle), pancreas, prostate and lung.

Its subcellular location is the cytoplasm. It localises to the cytoskeleton. It is found in the microtubule organizing center. The protein localises to the centrosome. The protein resides in the centriole. Its subcellular location is the nucleus. In terms of biological role, microtubule-dependent motor protein required for spindle pole assembly during mitosis. Required to stabilize the pericentriolar material (PCM). The polypeptide is StAR-related lipid transfer protein 9 (STARD9) (Homo sapiens (Human)).